A 202-amino-acid chain; its full sequence is Putative NAD(P)H nitroreductase YodC (202 aa).

FMN-binding positions include 11-13 (RAS), 68-70 (QKQ), 155-156 (GG), and R192.

This sequence belongs to the nitroreductase family. Requires FMN as cofactor.

The protein localises to the cytoplasm. In terms of biological role, putative nitroreductase that may contribute to the degradation of aromatic compounds. This Bacillus subtilis (strain 168) protein is Putative NAD(P)H nitroreductase YodC (yodC).